The following is a 392-amino-acid chain: GPI alpha-1,4-mannosyltransferase I, catalytic subunit (392 aa).

At 1–4 (MEAR) the chain is on the cytoplasmic side. The chain crosses the membrane as a helical span at residues 5–25 (VCVLFGAAALLRLLLLCVGVY). At 26–65 (QDQTLKLKYTDVDYHVFTDAARFITQGESPYRRSTFRYTP) the chain is on the lumenal side. The chain crosses the membrane as a helical span at residues 66–86 (LLALLLVPNVYLSLLFGKLLF). Residues 87–125 (GFCDLLSGLLMFRLLVLRGASHGSACVSCGLWLLNPLPM) are Cytoplasmic-facing. A helical transmembrane segment spans residues 126 to 148 (AVSTRGNAESVLAVLVLSTLLCL). Residues 149–156 (QLRKHTTA) lie on the Lumenal side of the membrane. Residues 157–177 (ALLFGLSVHMKIYPVTYALPI) form a helical membrane-spanning segment. The Cytoplasmic portion of the chain corresponds to 178 to 198 (ALALTAAPARGRGVLLRFFSP). A helical membrane pass occupies residues 199–219 (ALLRFAAVSAAVFLSLGLIFY). Residues 220–261 (CRYGWEFLQEAYLYHLTRRDLRHNFSPFFYLQYVCAERCWSS) lie on the Lumenal side of the membrane. A helical transmembrane segment spans residues 262–282 (GLLPLLLLPQLLLLLLASAAF). Over 283 to 302 (SSDLPFCCFLHTAVFVSFNR) the chain is Cytoplasmic. The chain crosses the membrane as a helical span at residues 303–323 (VCTSQYFLWYLCLLPVVLPRL). The Lumenal segment spans residues 324 to 330 (RLRLGRG). A helical membrane pass occupies residues 331-351 (LLLLLLWLLLQGLWLAPAYLL). Residues 352–360 (EFQGWNSFS) are Cytoplasmic-facing. The helical transmembrane segment at 361-381 (WIWAASLLFLLTNTFILAQII) threads the bilayer. Residues 382–392 (QHYRPHDRKAD) lie on the Lumenal side of the membrane.

This sequence belongs to the PIGM family. In terms of assembly, part of the glycosylphosphatidylinositol-mannosyltransferase I complex that is composed of PIGM and PIGX.

It is found in the endoplasmic reticulum membrane. Its pathway is glycolipid biosynthesis; glycosylphosphatidylinositol-anchor biosynthesis. Functionally, catalytic subunit of the glycosylphosphatidylinositol-mannosyltransferase I complex which catalyzes the transfer of the first mannose, via an alpha-1,4 bond from a dolichol-phosphate-mannose (Dol-P-Man) to the glucosaminyl acyl phosphatidylinositol (GlcN-(acyl)PI) intermediate to generate alpha-D-Man-(1-&gt;4)-alpha-D-GlcN-(1-&gt;6)-(1-radyl,2-acyl-sn-glycero-3-phospho)-2-acyl-inositol and participates in the sixth step of the glycosylphosphatidylinositol-anchor biosynthesis. The polypeptide is GPI alpha-1,4-mannosyltransferase I, catalytic subunit (Danio rerio (Zebrafish)).